The primary structure comprises 492 residues: Glutamyl-tRNA(Gln) amidotransferase subunit A (492 aa).

Active-site charge relay system residues include Lys78 and Ser158. Ser182 serves as the catalytic Acyl-ester intermediate.

Belongs to the amidase family. GatA subfamily. In terms of assembly, heterotrimer of A, B and C subunits.

The catalysed reaction is L-glutamyl-tRNA(Gln) + L-glutamine + ATP + H2O = L-glutaminyl-tRNA(Gln) + L-glutamate + ADP + phosphate + H(+). Functionally, allows the formation of correctly charged Gln-tRNA(Gln) through the transamidation of misacylated Glu-tRNA(Gln) in organisms which lack glutaminyl-tRNA synthetase. The reaction takes place in the presence of glutamine and ATP through an activated gamma-phospho-Glu-tRNA(Gln). In Orientia tsutsugamushi (strain Boryong) (Rickettsia tsutsugamushi), this protein is Glutamyl-tRNA(Gln) amidotransferase subunit A.